The sequence spans 549 residues: Glucose-6-phosphate isomerase (549 aa).

Residue E355 is the Proton donor of the active site. Catalysis depends on residues H386 and K514.

This sequence belongs to the GPI family.

The protein localises to the cytoplasm. It carries out the reaction alpha-D-glucose 6-phosphate = beta-D-fructose 6-phosphate. Its pathway is carbohydrate biosynthesis; gluconeogenesis. The protein operates within carbohydrate degradation; glycolysis; D-glyceraldehyde 3-phosphate and glycerone phosphate from D-glucose: step 2/4. Its function is as follows. Catalyzes the reversible isomerization of glucose-6-phosphate to fructose-6-phosphate. This is Glucose-6-phosphate isomerase from Cronobacter sakazakii (strain ATCC BAA-894) (Enterobacter sakazakii).